Here is a 77-residue protein sequence, read N- to C-terminus: UPF0401 protein ECP_3010 (77 aa).

This sequence belongs to the UPF0401 family.

This chain is UPF0401 protein ECP_3010, found in Escherichia coli O6:K15:H31 (strain 536 / UPEC).